The following is a 102-amino-acid chain: DET1- and DDB1-associated protein 1 (102 aa).

At A2 the chain carries N-acetylalanine. Residues S33 and S95 each carry the phosphoserine modification. Residues N67 to T102 form a disordered region.

It belongs to the DDA1 family. Component of numerous DCX (DDB1-CUL4-X-box) E3 ubiquitin-protein ligase complexes which consist of a core of DDB1, cullin-4 (CUL4A or CUL4B), DDA1 and RBX1. Component of the DCX(DCAF15) complex, also named CLR4(DCAF15) complex, composed of DCAF15, DDB1, cullin-4 (CUL4A or CUL4B), DDA1 and RBX1. Part of the DDD core complex containing DET1, DDA1 and DDB1; the DDD core complex recruits a specific UBE2E enzyme, such as UBE2E1, UBE2E2 UBE2E3, to form specific DDD-E2 complexes.

Its pathway is protein modification; protein ubiquitination. Functions as a component of numerous distinct DCX (DDB1-CUL4-X-box) E3 ubiquitin-protein ligase complexes which mediate the ubiquitination and subsequent proteasomal degradation of target proteins. In the DCX complexes, acts as a scaffolding subunit required to stabilize the complex. This is DET1- and DDB1-associated protein 1 from Mus musculus (Mouse).